The following is a 685-amino-acid chain: MSSFSQVRNPITGQATWQENADDYDYHQEVANAGFGDMLHDWERNQKYYAAIKKTIKRMQADGREVHVLDIGTGTGILSMMALKAGADSVTACEAFLPMANCAAKIMTANGADKIQLIRKRSTEIQIGVDMARRANLLVAELLDTELIGEGAIGIYNHAHQELLTKDALCIPARARCYAQVATSSLAKQWNGFKLMANLDGETLLRVPPQLNECKGDAALHDLQLSQLPTESFRLFSKPVEIFEFDFQQHLEPIQKQRNKVVPLQASQPGSADMVFYWWDIDLDHESEIVLSCAPFWAHPDKDKHVAGEDKPLANAIPWRDHWMQAIYYIPKPLHLSNTKETFYLSCHHDEYSLWFDAQLKEPAESIERHHCTCDLHLINPRSRIGQLNQSPRNKRYLNYLEETTTKDSQFLVLGNSCFLGLATCGLGAASVEIYDSNSLSRRLLDSFIKFNKLENVSLLEKLEDVQDHSKLTHIFAEPYFINSILPWDNFYFGTLLLSLKDKLSEGTQISPCAARIFALPMEFLDLHKIRAPVGNCEGFDLSLFDEMVKDSADKAVSSVEAQPLWEYPGRALAQPQEILRVDFANFNQELHQQGSIELIRSKECNGIALWVDWQLYSSESPKAFVTSGPSQPIEIGKFVKWDMFVRQGVHFPQTRTTNATQVEWQIDFKPFLGELNFKFDLKSI.

SAM-dependent MTase PRMT-type domains lie at Q14 to W355 and A364 to I685.

It belongs to the class I-like SAM-binding methyltransferase superfamily. Protein arginine N-methyltransferase family. PRMT7 subfamily.

Its function is as follows. Essential arginine methyltransferase that can both catalyze the formation of omega-N monomethylarginine (MMA) and symmetrical dimethylarginine (sDMA). Specifically mediates the symmetrical dimethylation of arginine residues in the small nuclear ribonucleoproteins SmD1 and SmD3. This chain is Protein arginine N-methyltransferase 7 (Art7), found in Drosophila willistoni (Fruit fly).